The primary structure comprises 506 residues: Maturase K (506 aa).

It belongs to the intron maturase 2 family. MatK subfamily.

It is found in the plastid. It localises to the chloroplast. Usually encoded in the trnK tRNA gene intron. Probably assists in splicing its own and other chloroplast group II introns. In Mimosa pudica (Sensitive plant), this protein is Maturase K.